A 1370-amino-acid polypeptide reads, in one-letter code: DNA-directed RNA polymerase subunit beta (1370 aa).

The protein belongs to the RNA polymerase beta chain family. In terms of assembly, the RNAP catalytic core consists of 2 alpha, 1 beta, 1 beta' and 1 omega subunit. When a sigma factor is associated with the core the holoenzyme is formed, which can initiate transcription.

It carries out the reaction RNA(n) + a ribonucleoside 5'-triphosphate = RNA(n+1) + diphosphate. Its function is as follows. DNA-dependent RNA polymerase catalyzes the transcription of DNA into RNA using the four ribonucleoside triphosphates as substrates. In Geobacter metallireducens (strain ATCC 53774 / DSM 7210 / GS-15), this protein is DNA-directed RNA polymerase subunit beta.